Consider the following 1133-residue polypeptide: DNA repair protein rad8 (1133 aa).

2 disordered regions span residues 1–34 and 392–413; these read MKRK…SKPN and PEAR…EEDV. A Phosphoserine modification is found at serine 18. Residues 516–705 form the Helicase ATP-binding domain; it reads PNSMPYHRGG…YSLIKFMRYE (190 aa). Residue 529–536 participates in ATP binding; the sequence is DEMGLGKT. Residues 656–659 carry the DEGH box motif; the sequence is DEGH. Residues 877-923 form an RING-type zinc finger; sequence CPICCNEPIQNPLLLNCKHACCGDCLSEHIQYQKRRNIIPPLCHTCR. Residues 971 to 1125 enclose the Helicase C-terminal domain; the sequence is QLRQLTHSSE…EGKQQVQSIE (155 aa).

This sequence belongs to the SNF2/RAD54 helicase family.

The protein resides in the cytoplasm. Its subcellular location is the nucleus. Functionally, probable helicase, member of the UBC2/RAD6 epistasis group. Functions with DNA repair protein rad18 in error-free postreplication DNA repair. Involved in the maintenance of wild-type rates of instability of simple repetitive sequences such as poly(GT) repeats. Plays a role in surviving topoisomerase-mediated DNA damage. The chain is DNA repair protein rad8 from Schizosaccharomyces pombe (strain 972 / ATCC 24843) (Fission yeast).